Here is a 429-residue protein sequence, read N- to C-terminus: Adenylosuccinate synthetase (429 aa).

Residues 12–18 and 40–42 each bind GTP; these read GDEGKGK and GHT. Aspartate 13 (proton acceptor) is an active-site residue. Residues aspartate 13 and glycine 40 each contribute to the Mg(2+) site. IMP-binding positions include 13–16, 38–41, threonine 128, arginine 142, glutamine 224, threonine 239, and arginine 303; these read DEGK and NAGH. The active-site Proton donor is the histidine 41. 299–305 contributes to the substrate binding site; the sequence is VTTGRPR. Residues arginine 305, 331–333, and 413–415 each bind GTP; these read LLD and SVG.

Belongs to the adenylosuccinate synthetase family. As to quaternary structure, homodimer. Mg(2+) serves as cofactor.

It localises to the cytoplasm. The catalysed reaction is IMP + L-aspartate + GTP = N(6)-(1,2-dicarboxyethyl)-AMP + GDP + phosphate + 2 H(+). The protein operates within purine metabolism; AMP biosynthesis via de novo pathway; AMP from IMP: step 1/2. Its function is as follows. Plays an important role in the de novo pathway of purine nucleotide biosynthesis. Catalyzes the first committed step in the biosynthesis of AMP from IMP. The chain is Adenylosuccinate synthetase from Clostridioides difficile (strain 630) (Peptoclostridium difficile).